A 71-amino-acid polypeptide reads, in one-letter code: UPF0346 protein SPP_0954 (71 aa).

The protein belongs to the UPF0346 family.

This is UPF0346 protein SPP_0954 from Streptococcus pneumoniae (strain P1031).